Here is a 150-residue protein sequence, read N- to C-terminus: Large ribosomal subunit protein bL9 (150 aa).

It belongs to the bacterial ribosomal protein bL9 family.

Functionally, binds to the 23S rRNA. The polypeptide is Large ribosomal subunit protein bL9 (Shewanella frigidimarina (strain NCIMB 400)).